A 246-amino-acid chain; its full sequence is MKKKQVSHAIIISVMLSFVIAVFHTIHASELTPLAQMAEGMERQDVSIDKWTLHAKQNLSLTEKEFYQKVQRLKQEYRQYDWVIAREDKMIKAIGTYTDKKNRTSFRLQLVTTLKKHNPTSYLLYEQMSLETPDSWNDTYEQFERETLGIFQEKVVIFTCLNGHLDDNMNIVLQKKANQLLNEFQARSVEHVVEPNFVSISAFTDEWEEYIMTSKHKMNLQIALRSAGMGGKHTVTVGTPIVTTEY.

The first 30 residues, 1–30, serve as a signal peptide directing secretion; it reads MKKKQVSHAIIISVMLSFVIAVFHTIHASE.

This is an uncharacterized protein from Bacillus subtilis (strain 168).